Consider the following 278-residue polypeptide: Alcohol dehydrogenase-related 31 kDa protein (278 aa).

11–34 contacts NAD(+); that stretch reads YVADCGGIALETSKVLMTKNIAKL. A substrate-binding site is contributed by S139. The active-site Proton acceptor is the Y152.

This sequence belongs to the short-chain dehydrogenases/reductases (SDR) family.

The polypeptide is Alcohol dehydrogenase-related 31 kDa protein (Adhr) (Drosophila pseudoobscura pseudoobscura (Fruit fly)).